The primary structure comprises 84 residues: Putative antitoxin VapB7 (84 aa).

Antitoxin component of a possible type II toxin-antitoxin (TA) system. The cognate toxin is VapC7. The polypeptide is Putative antitoxin VapB7 (vapB7) (Mycobacterium tuberculosis (strain ATCC 25618 / H37Rv)).